The following is a 443-amino-acid chain: MDEEDQLIQPQDQSCWATLPDVCLRRVFWWLGDRDRSRAALVCRKWNQMMYSADLWRYRTITFSGRPSRVHASEFESALWYVKKFGRYLEHLEIKFLNPYNAVLTKKFQVTMRGLLSCLGKSNNRLKSLSIQHLELDRLVWRNSIRSSFMKSLSFFLKKMGKHLNYLSLKGARLTTEQGCHILNALSYLRNESTVTELNIEDCFSHHLAVYSSPQFNKTMATFRNLVSLTLNYNCISDELLENLCDNNTGTLRTMNIKCHIHDPHGQVIWGMSWAKLARHATSLKVNFFFERVMKYERLARILLQEIPIRSISLRSCYFSDPDWSMRPTLTDLLPTFRHTLQKLTFEFNNNHESLDEELHLLILSCRKLFYFKIWAFLDVKFVERILKSREEGQCALRTLKVRIYTNRYETNEEDRTLREIYRKYRKLIDSELNYFVIAYPMM.

Positions 16 to 61 constitute an F-box domain; that stretch reads WATLPDVCLRRVFWWLGDRDRSRAALVCRKWNQMMYSADLWRYRTI.

In terms of assembly, directly interacts with SKP1 and CUL1.

Functionally, substrate-recognition component of the SCF (SKP1-CUL1-F-box protein)-type E3 ubiquitin ligase complex. The chain is F-box only protein 39 (FBXO39) from Bos taurus (Bovine).